The following is a 290-amino-acid chain: 4-hydroxy-tetrahydrodipicolinate synthase (290 aa).

A pyruvate-binding site is contributed by threonine 44. Tyrosine 132 (proton donor/acceptor) is an active-site residue. Lysine 160 serves as the catalytic Schiff-base intermediate with substrate. Isoleucine 202 serves as a coordination point for pyruvate.

This sequence belongs to the DapA family. Homotetramer; dimer of dimers.

The protein resides in the cytoplasm. It carries out the reaction L-aspartate 4-semialdehyde + pyruvate = (2S,4S)-4-hydroxy-2,3,4,5-tetrahydrodipicolinate + H2O + H(+). It participates in amino-acid biosynthesis; L-lysine biosynthesis via DAP pathway; (S)-tetrahydrodipicolinate from L-aspartate: step 3/4. Catalyzes the condensation of (S)-aspartate-beta-semialdehyde [(S)-ASA] and pyruvate to 4-hydroxy-tetrahydrodipicolinate (HTPA). This is 4-hydroxy-tetrahydrodipicolinate synthase from Citrifermentans bemidjiense (strain ATCC BAA-1014 / DSM 16622 / JCM 12645 / Bem) (Geobacter bemidjiensis).